We begin with the raw amino-acid sequence, 476 residues long: UPF0481 protein At3g47200 (476 aa).

The interval 1 to 24 (MADKTDIISSSSDKASPPPPSAFR) is disordered. Transmembrane regions (helical) follow at residues 133–153 (LMFM…IMSG) and 439–459 (AVLF…LSYL).

The protein belongs to the UPF0481 family.

It is found in the membrane. This chain is UPF0481 protein At3g47200, found in Arabidopsis thaliana (Mouse-ear cress).